Here is a 118-residue protein sequence, read N- to C-terminus: Aspartate 1-decarboxylase (118 aa).

Ser-25 (schiff-base intermediate with substrate; via pyruvic acid) is an active-site residue. At Ser-25 the chain carries Pyruvic acid (Ser). Thr-57 serves as a coordination point for substrate. Residue Tyr-58 is the Proton donor of the active site. Position 73–75 (73–75 (GAA)) interacts with substrate.

It belongs to the PanD family. As to quaternary structure, heterooctamer of four alpha and four beta subunits. Requires pyruvate as cofactor. In terms of processing, is synthesized initially as an inactive proenzyme, which is activated by self-cleavage at a specific serine bond to produce a beta-subunit with a hydroxyl group at its C-terminus and an alpha-subunit with a pyruvoyl group at its N-terminus.

It is found in the cytoplasm. It carries out the reaction L-aspartate + H(+) = beta-alanine + CO2. It participates in cofactor biosynthesis; (R)-pantothenate biosynthesis; beta-alanine from L-aspartate: step 1/1. Its function is as follows. Catalyzes the pyruvoyl-dependent decarboxylation of aspartate to produce beta-alanine. This Hyphomonas neptunium (strain ATCC 15444) protein is Aspartate 1-decarboxylase.